The chain runs to 158 residues: MRKAKPKKRQILPDPVYGDVRVTKFVNHLMYDGKKNTAFSIFYGALDIVKTKHSNEEKSALEIWKAALDNITPQVEVKSRRIGGATFQVPTEIRPERKESISMKNLILYARKRGGKTMADKLAAEIVDAFNNQGAAFKRKEDMHRMAEANRAFAHFRF.

Belongs to the universal ribosomal protein uS7 family. In terms of assembly, part of the 30S ribosomal subunit. Contacts proteins S9 and S11.

In terms of biological role, one of the primary rRNA binding proteins, it binds directly to 16S rRNA where it nucleates assembly of the head domain of the 30S subunit. Is located at the subunit interface close to the decoding center, probably blocks exit of the E-site tRNA. The chain is Small ribosomal subunit protein uS7 from Porphyromonas gingivalis (strain ATCC BAA-308 / W83).